Reading from the N-terminus, the 295-residue chain is Methionine aminopeptidase (295 aa).

His62 provides a ligand contact to substrate. Asp82, Asp93, and His153 together coordinate a divalent metal cation. Residue His161 coordinates substrate. Glu187 and Glu280 together coordinate a divalent metal cation.

In terms of assembly, monomer. Co(2+) is required as a cofactor. The cofactor is Zn(2+). Requires Mn(2+) as cofactor. It depends on Fe(2+) as a cofactor.

It carries out the reaction Release of N-terminal amino acids, preferentially methionine, from peptides and arylamides.. Removes the N-terminal methionine from nascent proteins. The N-terminal methionine is often cleaved when the second residue in the primary sequence is small and uncharged (Met-Ala-, Cys, Gly, Pro, Ser, Thr, or Val). The polypeptide is Methionine aminopeptidase (Pyrococcus furiosus (strain ATCC 43587 / DSM 3638 / JCM 8422 / Vc1)).